Consider the following 237-residue polypeptide: Tetraspanin-8 (237 aa).

At 1–9 the chain is on the cytoplasmic side; it reads MAGVSACIK. The chain crosses the membrane as a helical span at residues 10–33; the sequence is YSMFTFNFLFWLCGILILALAIWV. The Extracellular segment spans residues 34–57; the sequence is RVSNDSQAIFGSEDVGSSSYVAVD. Residues 58–72 form a helical membrane-spanning segment; it reads ILIAVGAIIMILGFL. Topologically, residues 73-83 are cytoplasmic; the sequence is GCCGAIKESRC. Residues 84–109 form a helical membrane-spanning segment; the sequence is MLLLFFIGLLLILLLQVATGILGAVF. The Extracellular segment spans residues 110–205; it reads KSKSDRIVNE…SFIKDFLAKN (96 aa). Asparagine 118 is a glycosylation site (N-linked (GlcNAc...) asparagine). A helical transmembrane segment spans residues 206 to 230; sequence LIIVIGISFGLAVIEILGLVFSMVL. Residues 231 to 237 lie on the Cytoplasmic side of the membrane; that stretch reads YCQIGNK.

The protein belongs to the tetraspanin (TM4SF) family. Forms homooligomers. Interacts with MEP1B. Interacts with integrin alpha3/ITGA3. Interacts with RICTOR and MTOR. Interacts with ADAM17. Interacts with ECE1. Gastric, colon, rectal, and pancreatic carcinomas.

The protein resides in the cell membrane. In terms of biological role, structural component of specialized membrane microdomains known as tetraspanin-enriched microdomains (TERMs), which act as platforms for receptor clustering and signaling. Participates thereby in diverse biological functions such as cell signal transduction, migration and protein trafficking. Promotes ADAM17-mediated TNF-alpha processing through recruitment of ADAM17 to tetraspanin-enriched micro-domains (TEMs). Forms a complex with RICTOR and integrin alpha3/ITGA3 to mediate mTORC2 activation and AKT1 phosphorylation leading to cell migration. Reduces apoptosis and autophagy induced by high glucose levels through forming a complex with mTOR and RICTOR. Contributes to the maintenance of intestinal epithelial barrier and plays a role in the regulation of intestine inflammation by switching interferon gamma receptor 1/IFNGR1 from clathrin-dependent to lipid raft-dependent endocytosis route to limit STAT1 activation magnitude and duration. Acts as a modulator of the endothelin axis by associating with endothelin converting enzyme ECE1 and regulating its activity of conversion of the endothelin-1 precursor to endothelin. This Homo sapiens (Human) protein is Tetraspanin-8 (TSPAN8).